A 261-amino-acid chain; its full sequence is MLAKRIIPCLDVHGGRVVKGTNFVNLRDAGDPVELAAVYDKEGADEVVFLDITASSDGRAIMLDVVRRTAEEVFIPFTVGGGLRSVEDIREMLKAGADKISLNTSAVQTPKLISDGAWKFGSQCIVVAIDARRRRDAEGNPVEGWEVYTHGGRKPTGIDVLEWARRVEELGAGEILLTSMDKDGTKDGYDIPLTRAVSEAVTIPVIASGGVGNLDHIVEGLTVGKADAALAASIFHYREYTIGETKEYLRERGVHVRQWRD.

Catalysis depends on residues Asp-11 and Asp-130.

This sequence belongs to the HisA/HisF family. In terms of assembly, heterodimer of HisH and HisF.

Its subcellular location is the cytoplasm. It catalyses the reaction 5-[(5-phospho-1-deoxy-D-ribulos-1-ylimino)methylamino]-1-(5-phospho-beta-D-ribosyl)imidazole-4-carboxamide + L-glutamine = D-erythro-1-(imidazol-4-yl)glycerol 3-phosphate + 5-amino-1-(5-phospho-beta-D-ribosyl)imidazole-4-carboxamide + L-glutamate + H(+). The protein operates within amino-acid biosynthesis; L-histidine biosynthesis; L-histidine from 5-phospho-alpha-D-ribose 1-diphosphate: step 5/9. Its function is as follows. IGPS catalyzes the conversion of PRFAR and glutamine to IGP, AICAR and glutamate. The HisF subunit catalyzes the cyclization activity that produces IGP and AICAR from PRFAR using the ammonia provided by the HisH subunit. The polypeptide is Imidazole glycerol phosphate synthase subunit HisF (Heliobacterium modesticaldum (strain ATCC 51547 / Ice1)).